Consider the following 1752-residue polypeptide: Chitin synthase E (1752 aa).

1-8 contributes to the ATP binding site; it reads GESGSGKT. Residues 492 to 520 are disordered; sequence SSKPLRMPSMARRKTSPSSRLAFDAGDAD. The tract at residues 558 to 582 is actin-binding; it reads LDIVNKCLSSTNLNPYFIFCLKPND. Transmembrane regions (helical) follow at residues 789–809 and 828–848; these read WIAL…KLFG and LIIW…PGLV. Residues 852–940 form the Cytochrome b5 heme-binding domain; the sequence is QHVYSAAELS…LLDYRPTNIS (89 aa). N-linked (GlcNAc...) asparagine glycosylation is found at Asn938 and Asn963. A helical membrane pass occupies residues 1099–1119; sequence FILAISVLICSIIVFKFLAAL. Asn1322, Asn1356, and Asn1462 each carry an N-linked (GlcNAc...) asparagine glycan. Transmembrane regions (helical) follow at residues 1494-1514, 1520-1540, and 1547-1567; these read LSTV…YWLV, IPYT…LIFI, and MVGW…PCPS. N-linked (GlcNAc...) asparagine glycosylation is present at Asn1685. A DEK-C domain is found at 1689–1744; that stretch reads LPSDDAILAEIREILRTADLMSVTKKSIKLELERAFGVNLDLKRPYINSGKGYTFP.

The protein in the N-terminal section; belongs to the TRAFAC class myosin-kinesin ATPase superfamily. Myosin family. In the C-terminal section; belongs to the chitin synthase family. Class V subfamily.

The protein resides in the cell membrane. It localises to the cell septum. It is found in the cell tip. The catalysed reaction is [(1-&gt;4)-N-acetyl-beta-D-glucosaminyl](n) + UDP-N-acetyl-alpha-D-glucosamine = [(1-&gt;4)-N-acetyl-beta-D-glucosaminyl](n+1) + UDP + H(+). Functionally, polymerizes chitin, a structural polymer of the cell wall and septum, by transferring the sugar moiety of UDP-GlcNAc to the non-reducing end of the growing chitin polymer. Important for hyphal growth and conidiophore development but not pathogenicity. In Aspergillus fumigatus (Neosartorya fumigata), this protein is Chitin synthase E.